A 212-amino-acid polypeptide reads, in one-letter code: Adenylate kinase (212 aa).

ATP is bound at residue 14–19 (GSGKGT). An NMP region spans residues 34–63 (STGDLFRKKISEDSQFAAQIQNYLSSGSYV). AMP-binding positions include Thr35, Arg40, 61–63 (SYV), 89–92 (GYPR), and Gln96. Residues 126–163 (QRLFCQKCQKSYNLLLAKPKNGLKCDLDNTDLITRNDD) form an LID region. Arg127 serves as a coordination point for ATP. Zn(2+)-binding residues include Cys130 and Cys133. 136-137 (SY) contacts ATP. 2 residues coordinate Zn(2+): Cys150 and Asp153. AMP-binding residues include Arg160 and Arg171. Gln199 provides a ligand contact to ATP.

It belongs to the adenylate kinase family. Monomer.

The protein localises to the cytoplasm. It catalyses the reaction AMP + ATP = 2 ADP. It functions in the pathway purine metabolism; AMP biosynthesis via salvage pathway; AMP from ADP: step 1/1. Catalyzes the reversible transfer of the terminal phosphate group between ATP and AMP. Plays an important role in cellular energy homeostasis and in adenine nucleotide metabolism. This is Adenylate kinase from Mesomycoplasma hyopneumoniae (strain 7448) (Mycoplasma hyopneumoniae).